The primary structure comprises 118 residues: Large ribosomal subunit protein bL20 (118 aa).

Belongs to the bacterial ribosomal protein bL20 family.

Its function is as follows. Binds directly to 23S ribosomal RNA and is necessary for the in vitro assembly process of the 50S ribosomal subunit. It is not involved in the protein synthesizing functions of that subunit. This is Large ribosomal subunit protein bL20 from Cyanothece sp. (strain PCC 7425 / ATCC 29141).